Here is a 1148-residue protein sequence, read N- to C-terminus: Replication factor C subunit 1 (1148 aa).

The segment covering 46–56 (NSSRKEDDFKQ) has biased composition (basic and acidic residues). Disordered stretches follow at residues 46–201 (NSSR…LNDE) and 228–380 (TLAM…TNYQ). K50 is covalently cross-linked (Glycyl lysine isopeptide (Lys-Gly) (interchain with G-Cter in SUMO2)). The residue at position 67 (Y67) is a Phosphotyrosine. Phosphoserine is present on residues S69, S71, S73, and S108. T110 is subject to Phosphothreonine. A compositionally biased stretch (polar residues) spans 130-141 (RSTNSHLGTSNM). The residue at position 156 (S156) is a Phosphoserine. 2 positions are modified to phosphothreonine: T161 and T163. Phosphoserine is present on residues S164, S173, and S190. A compositionally biased stretch (basic and acidic residues) spans 234–246 (EEPKTKKARKDTE). S253 carries the phosphoserine modification. Residues 262 to 271 (EKHKYPHKVK) show a composition bias toward basic residues. Phosphoserine occurs at positions 281 and 283. The segment covering 288-308 (SKYESSKESQQHSKSSADKIG) has biased composition (basic and acidic residues). At S312 the chain carries Phosphoserine. 2 stretches are compositionally biased toward basic and acidic residues: residues 323-353 (KRKE…ETKT) and 362-376 (AKKE…EKKR). At S368 the chain carries Phosphoserine. The BRCT domain maps to 402-492 (GAENCLEGLI…PGKKSKYEIA (91 aa)). Basic and acidic residues-rich tracts occupy residues 496-507 (EMKKESKLERTP) and 520-538 (SKKE…RDSL). The disordered stretch occupies residues 496–538 (EMKKESKLERTPQKNVQGKRKISPSKKESESKKSRPTSKRDSL). S537 is subject to Phosphoserine. 650 to 657 (SGPPGVGK) contributes to the ATP binding site. The segment at 1081–1148 (KASRHSTSPS…RKGKGKSSKK (68 aa)) is disordered. A compositionally biased stretch (acidic residues) spans 1094–1105 (EYNEELNEDDSQ). S1104 and S1106 each carry phosphoserine. Positions 1120–1124 (IKKKT) match the Nuclear localization signal motif. A compositionally biased stretch (basic and acidic residues) spans 1130–1140 (SKPEKDKEPRK).

It belongs to the activator 1 large subunit family. Large subunit of the RFC complex, an heteropentameric complex consisting of RFC1 and four small subunits RFC2, RFC3, RFC4 and RFC5; the RFC complex interacts with PCNA and the interaction involves RFC1. Wide tissue distribution. Undetectable in placental tissue.

The protein resides in the nucleus. Subunit of the replication factor C (RFC) complex which acts during elongation of primed DNA templates by DNA polymerases delta and epsilon, and is necessary for ATP-dependent loading of proliferating cell nuclear antigen (PCNA) onto primed DNA. This subunit binds to the primer-template junction. Binds the PO-B transcription element as well as other GA rich DNA sequences. Can bind single- or double-stranded DNA. The polypeptide is Replication factor C subunit 1 (RFC1) (Homo sapiens (Human)).